Here is a 492-residue protein sequence, read N- to C-terminus: GTPase Obg (492 aa).

An Obg domain is found at 2–159 (PRFVDRVVIH…RELTLELKTV (158 aa)). Positions 160-340 (ADVGLIGFPS…LIFGLWQMIS (181 aa)) constitute an OBG-type G domain. GTP-binding positions include 166 to 173 (GFPSAGKS), 191 to 195 (FTTLV), 212 to 215 (DVPG), 292 to 295 (NKID), and 321 to 323 (STV). Mg(2+) is bound by residues Ser-173 and Thr-193. One can recognise an OCT domain in the interval 358-438 (PVPVDDSGFR…IGDMTFDWEP (81 aa)). The segment at 441 to 492 (PAGQQVVLSGRGTDARLERTERVGAAERKAARRQRRTGDDAERGTTERGENT) is disordered. Composition is skewed to basic and acidic residues over residues 453 to 469 (TDAR…AERK) and 476 to 492 (RTGD…GENT).

It belongs to the TRAFAC class OBG-HflX-like GTPase superfamily. OBG GTPase family. Monomer. The cofactor is Mg(2+).

Its subcellular location is the cytoplasm. Functionally, an essential GTPase which binds GTP, GDP and possibly (p)ppGpp with moderate affinity, with high nucleotide exchange rates and a fairly low GTP hydrolysis rate. Plays a role in control of the cell cycle, stress response, ribosome biogenesis and in those bacteria that undergo differentiation, in morphogenesis control. In Mycolicibacterium paratuberculosis (strain ATCC BAA-968 / K-10) (Mycobacterium paratuberculosis), this protein is GTPase Obg.